A 277-amino-acid polypeptide reads, in one-letter code: Large ribosomal subunit protein uL2 (277 aa).

Disordered stretches follow at residues 1–20 (MAVKKYRPYTPSRRQMTTAD) and 210–277 (GRSR…RGGK). A compositionally biased stretch (basic residues) spans 210-221 (GRSRWLGRKPHQ).

It belongs to the universal ribosomal protein uL2 family. As to quaternary structure, part of the 50S ribosomal subunit. Forms a bridge to the 30S subunit in the 70S ribosome.

Functionally, one of the primary rRNA binding proteins. Required for association of the 30S and 50S subunits to form the 70S ribosome, for tRNA binding and peptide bond formation. It has been suggested to have peptidyltransferase activity; this is somewhat controversial. Makes several contacts with the 16S rRNA in the 70S ribosome. In Deinococcus deserti (strain DSM 17065 / CIP 109153 / LMG 22923 / VCD115), this protein is Large ribosomal subunit protein uL2.